We begin with the raw amino-acid sequence, 469 residues long: Origin recognition complex subunit 6 (469 aa).

Low complexity-rich tracts occupy residues 218-234 and 275-308; these read SSTL…TAPK and ATPT…LSST. 4 disordered regions span residues 218-241, 275-309, 356-423, and 436-469; these read SSTL…PIPS, ATPT…SSTN, ESPF…EGDL, and KEQQ…SFFK. Composition is skewed to basic and acidic residues over residues 380 to 390 and 409 to 423; these read SRDELEKESEL and QKEK…EGDL. The span at 454 to 469 shows a compositional bias: polar residues; it reads TPVNATKQLTLDSFFK.

It belongs to the ORC6 family. As to quaternary structure, ORC is composed of six subunits.

It localises to the nucleus. Its function is as follows. Component of the origin recognition complex (ORC) that binds origins of replication. DNA-binding is ATP-dependent, however specific DNA sequences that define origins of replication have not been identified so far. ORC is required to assemble the pre-replication complex necessary to initiate DNA replication. The sequence is that of Origin recognition complex subunit 6 (orcF) from Dictyostelium discoideum (Social amoeba).